A 195-amino-acid polypeptide reads, in one-letter code: Dephospho-CoA kinase (195 aa).

In terms of domain architecture, DPCK spans 2–195 (IISLTGGIGV…DIVDSLNLNT (194 aa)). Residue 10–15 (GVGKSF) coordinates ATP.

Belongs to the CoaE family.

It is found in the cytoplasm. It catalyses the reaction 3'-dephospho-CoA + ATP = ADP + CoA + H(+). It functions in the pathway cofactor biosynthesis; coenzyme A biosynthesis; CoA from (R)-pantothenate: step 5/5. Functionally, catalyzes the phosphorylation of the 3'-hydroxyl group of dephosphocoenzyme A to form coenzyme A. The protein is Dephospho-CoA kinase of Wolbachia pipientis wMel.